The chain runs to 1592 residues: Probable serine/threonine-protein kinase DDB_G0293958 (1592 aa).

Residues Met1–Ile302 enclose the Protein kinase 1 domain. ATP is bound by residues Thr2–Lys10 and Lys43. The active-site Proton acceptor is Asp158. Disordered stretches follow at residues Ile348–Asn402, Phe455–Asn526, and Lys837–Ser867. Positions Asn349–Asn402 are enriched in low complexity. Residues Ser461–Asn518 adopt a coiled-coil conformation. A compositionally biased stretch (basic and acidic residues) spans Gln486 to Glu496. Composition is skewed to low complexity over residues Asn499–Asn526 and Lys837–Asn864. Residues Leu1342 to Leu1592 form the Protein kinase 2 domain. Residues Ile1348 to Ile1356 and Lys1376 contribute to the ATP site. Asp1474 functions as the Proton acceptor in the catalytic mechanism.

Belongs to the protein kinase superfamily. Ser/Thr protein kinase family.

The enzyme catalyses L-seryl-[protein] + ATP = O-phospho-L-seryl-[protein] + ADP + H(+). The catalysed reaction is L-threonyl-[protein] + ATP = O-phospho-L-threonyl-[protein] + ADP + H(+). The polypeptide is Probable serine/threonine-protein kinase DDB_G0293958 (Dictyostelium discoideum (Social amoeba)).